The chain runs to 418 residues: Adenosylhomocysteinase (418 aa).

Threonine 53, aspartate 125, and glutamate 150 together coordinate substrate. NAD(+) is bound at residue 151–153 (TTT). The substrate site is built by lysine 180 and aspartate 184. NAD(+) is bound by residues asparagine 185, 214-219 (GYGWCG), glutamate 237, asparagine 272, 293-295 (SGH), and asparagine 340.

Belongs to the adenosylhomocysteinase family. NAD(+) serves as cofactor.

It is found in the cytoplasm. The catalysed reaction is S-adenosyl-L-homocysteine + H2O = L-homocysteine + adenosine. Its pathway is amino-acid biosynthesis; L-homocysteine biosynthesis; L-homocysteine from S-adenosyl-L-homocysteine: step 1/1. In terms of biological role, may play a key role in the regulation of the intracellular concentration of adenosylhomocysteine. This Aquifex aeolicus (strain VF5) protein is Adenosylhomocysteinase.